The sequence spans 220 residues: Flavin-dependent thymidylate synthase (220 aa).

The ThyX domain occupies 1 to 208; the sequence is MKIDILDKGF…PWTFEAFLKY (208 aa). FAD is bound by residues Thr55, 78–81, and Glu86; that span reads RHRI. Residues 75–78, 86–90, and Arg147 each bind dUMP; these read QWFR and ELSGR. A ThyX motif motif is present at residues 78-88; that stretch reads RHRIASYNELS. FAD-binding positions include 163–165 and Asn169; that span reads NAR. DUMP is bound at residue Arg174. Residue Arg174 is the Involved in ionization of N3 of dUMP, leading to its activation of the active site.

The protein belongs to the thymidylate synthase ThyX family. Homotetramer. FAD is required as a cofactor.

The catalysed reaction is dUMP + (6R)-5,10-methylene-5,6,7,8-tetrahydrofolate + NADPH + H(+) = dTMP + (6S)-5,6,7,8-tetrahydrofolate + NADP(+). It carries out the reaction dUMP + formaldehyde + NADPH + H(+) = dTMP + NADP(+) + H2O. Its pathway is pyrimidine metabolism; dTTP biosynthesis. In terms of biological role, catalyzes the reductive methylation of 2'-deoxyuridine-5'-monophosphate (dUMP or deoxyuridylate) to 2'-deoxythymidine-5'-monophosphate (dTMP or deoxythymidylate) while utilizing 5,10-methylenetetrahydrofolate (mTHF) as the methylene donor, and NAD(P)H and FADH(2) as the reductant. This reaction is a critical step in DNA biosynthesis. Can also use formaldehyde instead of mTHF as a direct methylene donor for dTMP synthesis. However, the tighter binding of ThyX to mTHF (KD of 4 uM) compared to formaldehyde (KD of 20 mM) confirms that methylene tetrahydrofolate acts as the biological carbon donor for ThyX, serving as a formaldehyde carrier/transporter and thus avoiding genotoxic effects. This is Flavin-dependent thymidylate synthase from Thermotoga maritima (strain ATCC 43589 / DSM 3109 / JCM 10099 / NBRC 100826 / MSB8).